Reading from the N-terminus, the 194-residue chain is Protein GrpE (194 aa).

The disordered stretch occupies residues 1-39 (MTNHEQDQQDNSELLDDDQVTLESQQAADSGAEAPASDD). The span at 8–20 (QQDNSELLDDDQV) shows a compositional bias: acidic residues.

It belongs to the GrpE family. Homodimer.

The protein resides in the cytoplasm. Participates actively in the response to hyperosmotic and heat shock by preventing the aggregation of stress-denatured proteins, in association with DnaK and GrpE. It is the nucleotide exchange factor for DnaK and may function as a thermosensor. Unfolded proteins bind initially to DnaJ; upon interaction with the DnaJ-bound protein, DnaK hydrolyzes its bound ATP, resulting in the formation of a stable complex. GrpE releases ADP from DnaK; ATP binding to DnaK triggers the release of the substrate protein, thus completing the reaction cycle. Several rounds of ATP-dependent interactions between DnaJ, DnaK and GrpE are required for fully efficient folding. The sequence is that of Protein GrpE from Saccharophagus degradans (strain 2-40 / ATCC 43961 / DSM 17024).